The sequence spans 176 residues: Probable inosine/xanthosine triphosphatase (176 aa).

Asp-36 serves as a coordination point for Mg(2+).

Belongs to the YjjX NTPase family. In terms of assembly, homodimer. The cofactor is Mg(2+). Requires Mn(2+) as cofactor.

It carries out the reaction XTP + H2O = XDP + phosphate + H(+). The catalysed reaction is ITP + H2O = IDP + phosphate + H(+). Its function is as follows. Phosphatase that hydrolyzes non-canonical purine nucleotides such as XTP and ITP to their respective diphosphate derivatives. Probably excludes non-canonical purines from DNA/RNA precursor pool, thus preventing their incorporation into DNA/RNA and avoiding chromosomal lesions. In Saccharolobus solfataricus (strain ATCC 35092 / DSM 1617 / JCM 11322 / P2) (Sulfolobus solfataricus), this protein is Probable inosine/xanthosine triphosphatase.